A 977-amino-acid chain; its full sequence is Kinesin-like protein KIN-7L, chloroplastic (977 aa).

A compositionally biased stretch (polar residues) spans M1–G12. The tract at residues M1–N66 is disordered. Low complexity-rich tracts occupy residues S22–S31 and S38–P54. The region spanning N66 to I385 is the Kinesin motor domain. An ATP-binding site is contributed by G146–T153. A coiled-coil region spans residues E386–K471. Positions D549–G589 are disordered. Residues S551–S561 are compositionally biased toward low complexity. The span at A563 to G575 shows a compositional bias: polar residues. Coiled-coil stretches lie at residues M626–I688 and I732–E942. Polar residues predominate over residues S864–L876. Disordered stretches follow at residues S864 to E891 and A958 to T977. Basic and acidic residues predominate over residues G879–E891. A compositionally biased stretch (polar residues) spans A958–V967. A compositionally biased stretch (basic and acidic residues) spans S968–T977.

Belongs to the TRAFAC class myosin-kinesin ATPase superfamily. Kinesin family. KIN-7 subfamily.

The protein resides in the plastid. Its subcellular location is the chloroplast. This chain is Kinesin-like protein KIN-7L, chloroplastic, found in Arabidopsis thaliana (Mouse-ear cress).